We begin with the raw amino-acid sequence, 1186 residues long: ATP-dependent helicase/nuclease subunit A (1186 aa).

The UvrD-like helicase ATP-binding domain maps to 2–460 (NFSKNQRAVI…IELSENYRSQ (459 aa)). Position 23 to 30 (23 to 30 (ASAGSGKT)) interacts with ATP. One can recognise a UvrD-like helicase C-terminal domain in the interval 487–771 (DVELKAANRD…SVMTIHAAKG (285 aa)).

The protein belongs to the helicase family. AddA subfamily. As to quaternary structure, heterodimer of AddA and AddB/RexB. Requires Mg(2+) as cofactor.

The enzyme catalyses Couples ATP hydrolysis with the unwinding of duplex DNA by translocating in the 3'-5' direction.. It carries out the reaction ATP + H2O = ADP + phosphate + H(+). The heterodimer acts as both an ATP-dependent DNA helicase and an ATP-dependent, dual-direction single-stranded exonuclease. Recognizes the chi site generating a DNA molecule suitable for the initiation of homologous recombination. The AddA nuclease domain is required for chi fragment generation; this subunit has the helicase and 3' -&gt; 5' nuclease activities. This is ATP-dependent helicase/nuclease subunit A from Oenococcus oeni (strain ATCC BAA-331 / PSU-1).